A 228-amino-acid polypeptide reads, in one-letter code: Small ribosomal subunit protein uS10m (228 aa).

A mitochondrion-targeting transit peptide spans 1 to 17; it reads MKRYMFGTLPRVQPKRC.

It belongs to the universal ribosomal protein uS10 family. In terms of assembly, component of the mitochondrial small ribosomal subunit (mt-SSU). Mature yeast 74S mitochondrial ribosomes consist of a small (37S) and a large (54S) subunit. The 37S small subunit contains a 15S ribosomal RNA (15S mt-rRNA) and at least 32 different proteins. The 54S large subunit contains a 21S rRNA (21S mt-rRNA) and at least 45 different proteins.

The protein resides in the mitochondrion. Its function is as follows. Component of the mitochondrial ribosome (mitoribosome), a dedicated translation machinery responsible for the synthesis of mitochondrial genome-encoded proteins, including at least some of the essential transmembrane subunits of the mitochondrial respiratory chain. The mitoribosomes are attached to the mitochondrial inner membrane and translation products are cotranslationally integrated into the membrane. This is Small ribosomal subunit protein uS10m (rsm10) from Schizosaccharomyces pombe (strain 972 / ATCC 24843) (Fission yeast).